The sequence spans 63 residues: 2-hydroxymuconate tautomerase (63 aa).

The active-site Proton acceptor; via imino nitrogen is Pro-2.

The protein belongs to the 4-oxalocrotonate tautomerase family. As to quaternary structure, homohexamer.

The catalysed reaction is (2Z,4E)-2-hydroxyhexa-2,4-dienedioate = (3E)-2-oxohex-3-enedioate. It participates in xenobiotic degradation; toluene degradation. The protein operates within xenobiotic degradation; xylene degradation. Its function is as follows. Catalyzes the ketonization of 2-hydroxymuconate stereoselectively to yield 2-oxo-3-hexenedioate. This chain is 2-hydroxymuconate tautomerase (xylH), found in Pseudomonas putida (Arthrobacter siderocapsulatus).